Consider the following 370-residue polypeptide: MKSGRFIGVMSGTSLDGIDVVLAAIDERMVAQQASYCHPMPLQLKKDILGMCQGQSTTLSAVGKLDAQLGILFAEAVLALLAKAGLTAQDITAIGCHGQTVWHEPLGEPAFTMQLGDNNRIAAMTKIATVGDFRRRDMAYGGQGAPLVPAFHHALLAHSTERRMVLNIGGIANLSMLLPDLPVRGFDTGPGNMLMDAWIWRNRSLPYDKDAAWALSGQVNQPLLELMYSDPYFAKPAPKSTGREYFNAGWLDKQLNKIPGIKPEDVQATLAELTALSVAEQVQLAGGCERLLVCGGGARNPLVMSRMSTLLPGTEVCVTDDFGVSGDDMEALAFAWLAFRTLSGKSGNLPSVTGASCETILGAVYPVSSR.

Position 12-19 (12-19 (GTSLDGID)) interacts with ATP.

This sequence belongs to the anhydro-N-acetylmuramic acid kinase family.

It carries out the reaction 1,6-anhydro-N-acetyl-beta-muramate + ATP + H2O = N-acetyl-D-muramate 6-phosphate + ADP + H(+). The protein operates within amino-sugar metabolism; 1,6-anhydro-N-acetylmuramate degradation. Its pathway is cell wall biogenesis; peptidoglycan recycling. Catalyzes the specific phosphorylation of 1,6-anhydro-N-acetylmuramic acid (anhMurNAc) with the simultaneous cleavage of the 1,6-anhydro ring, generating MurNAc-6-P. Is required for the utilization of anhMurNAc either imported from the medium or derived from its own cell wall murein, and thus plays a role in cell wall recycling. The sequence is that of Anhydro-N-acetylmuramic acid kinase from Yersinia enterocolitica serotype O:8 / biotype 1B (strain NCTC 13174 / 8081).